The sequence spans 360 residues: NAD(P)H-quinone oxidoreductase subunit 1, chloroplastic (360 aa).

Helical transmembrane passes span 30-50 (FLPI…LVWL), 98-118 (FSIG…VIPF), 127-147 (FNIG…GLLM), 165-185 (AAQS…ISLL), 203-223 (FWGW…ISSL), 248-268 (YSGI…LISS), 297-317 (IFGT…FLFI), and 340-360 (FLLP…VFSL).

This sequence belongs to the complex I subunit 1 family. NDH is composed of at least 16 different subunits, 5 of which are encoded in the nucleus.

The protein resides in the plastid. Its subcellular location is the chloroplast thylakoid membrane. The catalysed reaction is a plastoquinone + NADH + (n+1) H(+)(in) = a plastoquinol + NAD(+) + n H(+)(out). The enzyme catalyses a plastoquinone + NADPH + (n+1) H(+)(in) = a plastoquinol + NADP(+) + n H(+)(out). NDH shuttles electrons from NAD(P)H:plastoquinone, via FMN and iron-sulfur (Fe-S) centers, to quinones in the photosynthetic chain and possibly in a chloroplast respiratory chain. The immediate electron acceptor for the enzyme in this species is believed to be plastoquinone. Couples the redox reaction to proton translocation, and thus conserves the redox energy in a proton gradient. This is NAD(P)H-quinone oxidoreductase subunit 1, chloroplastic from Aethionema grandiflorum (Persian stone-cress).